A 427-amino-acid polypeptide reads, in one-letter code: Serine--tRNA ligase 2 (427 aa).

Residues 35–53 (RRRSEAQAEVTRLRTELNR) are compositionally biased toward basic and acidic residues. Positions 35–72 (RRRSEAQAEVTRLRTELNRTSRARGRSGPPSEEEKEAA) are disordered. Position 230–232 (230–232 (TAE)) interacts with L-serine. 261–263 (RAE) lines the ATP pocket. Glu284 lines the L-serine pocket. An ATP-binding site is contributed by 348–351 (EISS). L-serine is bound at residue Ser383.

This sequence belongs to the class-II aminoacyl-tRNA synthetase family. Type-1 seryl-tRNA synthetase subfamily. In terms of assembly, homodimer. The tRNA molecule binds across the dimer.

Its subcellular location is the cytoplasm. It carries out the reaction tRNA(Ser) + L-serine + ATP = L-seryl-tRNA(Ser) + AMP + diphosphate + H(+). It catalyses the reaction tRNA(Sec) + L-serine + ATP = L-seryl-tRNA(Sec) + AMP + diphosphate + H(+). The protein operates within aminoacyl-tRNA biosynthesis; selenocysteinyl-tRNA(Sec) biosynthesis; L-seryl-tRNA(Sec) from L-serine and tRNA(Sec): step 1/1. Its function is as follows. Catalyzes the attachment of serine to tRNA(Ser). Is also able to aminoacylate tRNA(Sec) with serine, to form the misacylated tRNA L-seryl-tRNA(Sec), which will be further converted into selenocysteinyl-tRNA(Sec). This is Serine--tRNA ligase 2 from Streptomyces avermitilis (strain ATCC 31267 / DSM 46492 / JCM 5070 / NBRC 14893 / NCIMB 12804 / NRRL 8165 / MA-4680).